A 188-amino-acid chain; its full sequence is MLVAAFAAAGEEVEGNPTYPILPHLGELIVGIIFAIIIYAVIAKKVVPRLEAMYEERRAAIEGNVEKAEKAQAEAQVALEQYKAQLADARGEANRIREEARQQGAQILAEMREQAQAESERITTAARATIEAERVQATAQLRAEVGRLATDLAGRIVGESLQDSARQSGVVDRFLADLERSESGASSR.

The helical transmembrane segment at 21–41 (ILPHLGELIVGIIFAIIIYAV) threads the bilayer.

This sequence belongs to the ATPase B chain family. F-type ATPases have 2 components, F(1) - the catalytic core - and F(0) - the membrane proton channel. F(1) has five subunits: alpha(3), beta(3), gamma(1), delta(1), epsilon(1). F(0) has three main subunits: a(1), b(2) and c(10-14). The alpha and beta chains form an alternating ring which encloses part of the gamma chain. F(1) is attached to F(0) by a central stalk formed by the gamma and epsilon chains, while a peripheral stalk is formed by the delta and b chains.

It is found in the cell membrane. F(1)F(0) ATP synthase produces ATP from ADP in the presence of a proton or sodium gradient. F-type ATPases consist of two structural domains, F(1) containing the extramembraneous catalytic core and F(0) containing the membrane proton channel, linked together by a central stalk and a peripheral stalk. During catalysis, ATP synthesis in the catalytic domain of F(1) is coupled via a rotary mechanism of the central stalk subunits to proton translocation. In terms of biological role, component of the F(0) channel, it forms part of the peripheral stalk, linking F(1) to F(0). The protein is ATP synthase subunit b of Kineococcus radiotolerans (strain ATCC BAA-149 / DSM 14245 / SRS30216).